We begin with the raw amino-acid sequence, 180 residues long: Large ribosomal subunit protein uL6 (180 aa).

The protein belongs to the universal ribosomal protein uL6 family. Part of the 50S ribosomal subunit.

Its function is as follows. This protein binds to the 23S rRNA, and is important in its secondary structure. It is located near the subunit interface in the base of the L7/L12 stalk, and near the tRNA binding site of the peptidyltransferase center. This Clostridioides difficile (strain 630) (Peptoclostridium difficile) protein is Large ribosomal subunit protein uL6.